Reading from the N-terminus, the 462-residue chain is Tubby-like F-box protein 7 (462 aa).

Residues 54–109 (SKWAGLPPELLRDVMKRLEEDDSNWPSRKDVVACASVCTTWRDMCKDIVRNPEFCG) form the F-box domain. 2 disordered regions span residues 317–338 (FSEFGGGALQGQEQEQDGDDVN) and 383–418 (QPSSGAASEPSQAGQAAQQQTQPSQPSSSSSSSSSN). Positions 383–417 (QPSSGAASEPSQAGQAAQQQTQPSQPSSSSSSSSS) are enriched in low complexity.

The protein belongs to the TUB family. In terms of tissue distribution, ubiquitous.

The sequence is that of Tubby-like F-box protein 7 (TULP7) from Oryza sativa subsp. japonica (Rice).